Here is a 372-residue protein sequence, read N- to C-terminus: Oxoglutarate-dependent flavonoid 7-O-demethylase 1 (372 aa).

A Fe2OG dioxygenase domain is found at 221–321 (GIQALRMNYY…RLSVAAFLNP (101 aa)). Fe cation is bound by residues histidine 245, aspartate 247, and histidine 302. Residue arginine 312 coordinates 2-oxoglutarate.

The protein belongs to the iron/ascorbate-dependent oxidoreductase family. Monomer. It depends on Fe(2+) as a cofactor. L-ascorbate serves as cofactor. As to expression, accumulates in the trichomes of nevadensin-accumulating strains (e.g. cv. SD and cv. EMX-1) and in cv. SW (at protein level) but not in cv. MC.

The protein localises to the cytoplasm. The catalysed reaction is gardenin B + 2-oxoglutarate + O2 = nevadensin + formaldehyde + succinate + CO2 + H(+). The enzyme catalyses 8-hydroxysalvigenin + 2-oxoglutarate + O2 = pilosin + formaldehyde + succinate + CO2. The protein operates within flavonoid metabolism. Its activity is regulated as follows. Inhibited by prohexadione-calcium, a 2-oxoglutarate-dependent dioxygenase (2-ODD) inhibitor, thus leading to a decreased abundance of nevadensin (NEV) and absence of pilosin (PIL) production, but to the accumulation of gardenin B (GARD B) and 8-hydroxysalvigenin (8-OH-SALV). In terms of biological role, oxoglutarate-dependent dioxygenase (2-ODD) acting as a flavonoid 7-O-demethylase involved in the biosynthesis of polymethoxylated flavonoids natural products such as nevadensin and salvigenin, aroma compounds which contribute to the flavor of sweet basil, and exhibit pharmacological activities such as anti-allergic, anti-oxidant, antibacterial, anti-proliferative, and anti-inflammatory effects. Catalyzes the 7-O-demethylation of methoxylated flavones; mediates the conversion of 8-hydroxysalvigenin (8-OH-SALV) to pilosin (PIL) and of gardenin B (GARD B) to nevadensin (NEV). The protein is Oxoglutarate-dependent flavonoid 7-O-demethylase 1 of Ocimum basilicum (Sweet basil).